A 212-amino-acid chain; its full sequence is Pyridoxine/pyridoxamine 5'-phosphate oxidase (212 aa).

Substrate-binding positions include 8-11 and Lys66; that span reads RRSY. FMN contacts are provided by residues 61–66, 76–77, Arg82, Lys83, and Gln105; these read RIVLLK and FT. Residues Tyr123, Arg127, and Ser131 each coordinate substrate. FMN contacts are provided by residues 140–141 and Trp184; that span reads QS. Residue 190–192 coordinates substrate; it reads RLH. Position 194 (Arg194) interacts with FMN.

This sequence belongs to the pyridoxamine 5'-phosphate oxidase family. Homodimer. FMN serves as cofactor.

The catalysed reaction is pyridoxamine 5'-phosphate + O2 + H2O = pyridoxal 5'-phosphate + H2O2 + NH4(+). The enzyme catalyses pyridoxine 5'-phosphate + O2 = pyridoxal 5'-phosphate + H2O2. It participates in cofactor metabolism; pyridoxal 5'-phosphate salvage; pyridoxal 5'-phosphate from pyridoxamine 5'-phosphate: step 1/1. The protein operates within cofactor metabolism; pyridoxal 5'-phosphate salvage; pyridoxal 5'-phosphate from pyridoxine 5'-phosphate: step 1/1. Functionally, catalyzes the oxidation of either pyridoxine 5'-phosphate (PNP) or pyridoxamine 5'-phosphate (PMP) into pyridoxal 5'-phosphate (PLP). The sequence is that of Pyridoxine/pyridoxamine 5'-phosphate oxidase from Cupriavidus necator (strain ATCC 17699 / DSM 428 / KCTC 22496 / NCIMB 10442 / H16 / Stanier 337) (Ralstonia eutropha).